Reading from the N-terminus, the 278-residue chain is Large ribosomal subunit protein uL2 (278 aa).

Residues H201–K278 form a disordered region. Positions G210 to V221 are enriched in basic residues.

It belongs to the universal ribosomal protein uL2 family. Part of the 50S ribosomal subunit. Forms a bridge to the 30S subunit in the 70S ribosome.

In terms of biological role, one of the primary rRNA binding proteins. Required for association of the 30S and 50S subunits to form the 70S ribosome, for tRNA binding and peptide bond formation. It has been suggested to have peptidyltransferase activity; this is somewhat controversial. Makes several contacts with the 16S rRNA in the 70S ribosome. In Rhizobium rhizogenes (strain K84 / ATCC BAA-868) (Agrobacterium radiobacter), this protein is Large ribosomal subunit protein uL2.